Reading from the N-terminus, the 88-residue chain is Small ribosomal subunit protein bS16c (88 aa).

Belongs to the bacterial ribosomal protein bS16 family.

It is found in the plastid. The protein resides in the chloroplast. The protein is Small ribosomal subunit protein bS16c of Citrus sinensis (Sweet orange).